We begin with the raw amino-acid sequence, 178 residues long: uncharacterized protein (178 aa).

Helical transmembrane passes span 1 to 21 (MISI…YGGG), 47 to 67 (MLAL…AYVG), 75 to 95 (GFLI…IVLL), 117 to 137 (VIAV…IKAI), and 158 to 178 (MHPA…IPYL).

This sequence belongs to the chromate ion transporter (CHR) (TC 2.A.51) family.

It localises to the cell membrane. This is an uncharacterized protein from Bacillus subtilis (strain 168).